A 208-amino-acid polypeptide reads, in one-letter code: Ribosomal RNA large subunit methyltransferase E (208 aa).

S-adenosyl-L-methionine-binding residues include glycine 63, tryptophan 65, aspartate 83, aspartate 99, and aspartate 124. The Proton acceptor role is filled by lysine 164.

The protein belongs to the class I-like SAM-binding methyltransferase superfamily. RNA methyltransferase RlmE family.

It localises to the cytoplasm. It carries out the reaction uridine(2552) in 23S rRNA + S-adenosyl-L-methionine = 2'-O-methyluridine(2552) in 23S rRNA + S-adenosyl-L-homocysteine + H(+). Specifically methylates the uridine in position 2552 of 23S rRNA at the 2'-O position of the ribose in the fully assembled 50S ribosomal subunit. The protein is Ribosomal RNA large subunit methyltransferase E of Salmonella agona (strain SL483).